The chain runs to 216 residues: Ribosomal RNA small subunit methyltransferase G (216 aa).

S-adenosyl-L-methionine-binding positions include glycine 81, leucine 86, 132 to 133, and arginine 147; that span reads VE.

It belongs to the methyltransferase superfamily. RNA methyltransferase RsmG family.

It localises to the cytoplasm. The catalysed reaction is guanosine(527) in 16S rRNA + S-adenosyl-L-methionine = N(7)-methylguanosine(527) in 16S rRNA + S-adenosyl-L-homocysteine. Functionally, specifically methylates the N7 position of guanine in position 527 of 16S rRNA. The polypeptide is Ribosomal RNA small subunit methyltransferase G (Hydrogenovibrio crunogenus (strain DSM 25203 / XCL-2) (Thiomicrospira crunogena)).